The following is a 377-amino-acid chain: Molybdenum import ATP-binding protein ModC (377 aa).

An ABC transporter domain is found at 4 to 240 (IAPRSIRGEF…PALPLATARD (237 aa)). Residue 38 to 45 (GPSGCGKS) coordinates ATP. The Mop domain maps to 299–369 (RTSILNILPA…IKGVALAPER (71 aa)).

It belongs to the ABC transporter superfamily. Molybdate importer (TC 3.A.1.8) family. The complex is composed of two ATP-binding proteins (ModC), two transmembrane proteins (ModB) and a solute-binding protein (ModA).

The protein localises to the cell inner membrane. It catalyses the reaction molybdate(out) + ATP + H2O = molybdate(in) + ADP + phosphate + H(+). Part of the ABC transporter complex ModABC involved in molybdenum import. Responsible for energy coupling to the transport system. This Rhodopseudomonas palustris (strain HaA2) protein is Molybdenum import ATP-binding protein ModC.